The sequence spans 464 residues: tRNA(Ile)-lysidine synthase (464 aa).

26-31 (SGGPDS) lines the ATP pocket.

This sequence belongs to the tRNA(Ile)-lysidine synthase family.

The protein localises to the cytoplasm. It catalyses the reaction cytidine(34) in tRNA(Ile2) + L-lysine + ATP = lysidine(34) in tRNA(Ile2) + AMP + diphosphate + H(+). In terms of biological role, ligates lysine onto the cytidine present at position 34 of the AUA codon-specific tRNA(Ile) that contains the anticodon CAU, in an ATP-dependent manner. Cytidine is converted to lysidine, thus changing the amino acid specificity of the tRNA from methionine to isoleucine. The polypeptide is tRNA(Ile)-lysidine synthase (Geobacillus kaustophilus (strain HTA426)).